The primary structure comprises 243 residues: Probable flavin-dependent thymidylate synthase (243 aa).

Positions 21–239 (FEVDDFEESK…PNTYQDIPDV (219 aa)) constitute a ThyX domain. Residues Ser80 and 103 to 105 (RHR) contribute to the FAD site. DUMP-binding positions include 100-103 (ELER), 113-115 (SQR), and Arg178. The short motif at 103 to 113 (RHRHLSFSVVS) is the ThyX motif element. FAD is bound at residue 194-196 (NHR). Position 205 (Arg205) interacts with dUMP. The Involved in ionization of N3 of dUMP, leading to its activation role is filled by Arg205.

Belongs to the thymidylate synthase ThyX family. In terms of assembly, homotetramer. Requires FAD as cofactor.

It catalyses the reaction dUMP + (6R)-5,10-methylene-5,6,7,8-tetrahydrofolate + NADPH + H(+) = dTMP + (6S)-5,6,7,8-tetrahydrofolate + NADP(+). It participates in pyrimidine metabolism; dTTP biosynthesis. Its function is as follows. Catalyzes the reductive methylation of 2'-deoxyuridine-5'-monophosphate (dUMP) to 2'-deoxythymidine-5'-monophosphate (dTMP) while utilizing 5,10-methylenetetrahydrofolate (mTHF) as the methyl donor, and NADPH and FADH(2) as the reductant. The protein is Probable flavin-dependent thymidylate synthase (48) of Mycobacterium phage L5 (Mycobacteriophage L5).